The primary structure comprises 162 residues: Small ribosomal subunit protein uS7m (162 aa).

This sequence belongs to the universal ribosomal protein uS7 family. Part of the small ribosomal subunit.

The protein localises to the mitochondrion. Functionally, one of the primary rRNA binding proteins, it binds directly to 16S-like rRNA where it nucleates assembly of the head domain of the small subunit. The sequence is that of Small ribosomal subunit protein uS7m (mrps7) from Dictyostelium citrinum (Slime mold).